Consider the following 547-residue polypeptide: Auxin transporter-like protein 3 (547 aa).

Residues 1 to 74 (MASGSSGGGY…DAWFSCASNQ (74 aa)) lie on the Cytoplasmic side of the membrane. The helical transmembrane segment at 75–92 (VAQVLLTLPYSFAQLGMA) threads the bilayer. Residues 93–94 (SG) are Extracellular-facing. The helical transmembrane segment at 95 to 115 (LLFQLFYGLLGSWTAYLISIL) threads the bilayer. Residues 116 to 151 (YLEYRTRKERDKVDFRNHVIQWFEVLDGLLGRHWRN) lie on the Cytoplasmic side of the membrane. The helical transmembrane segment at 152–172 (VGLAFNCTFLLFGSVIQLIGC) threads the bilayer. At 173 to 187 (ASNIYYINDHLDKRT) the chain is on the extracellular side. The helical transmembrane segment at 188-208 (WTYIFGACCATTVFIPSFHNY) threads the bilayer. Residues 209–211 (RIW) lie on the Cytoplasmic side of the membrane. A helical transmembrane segment spans residues 212–232 (SFLGLLMTTYTAWYIAVASLI). The Extracellular portion of the chain corresponds to 233 to 247 (HGQVEGVAHSGPTSI). A helical membrane pass occupies residues 248–268 (VLYFTGATNILYTFGGHAVTV). The Cytoplasmic portion of the chain corresponds to 269 to 281 (EIMHAMWRPQKFK). The helical transmembrane segment at 282–302 (AIYLLATVYVLTLTLPSASAA) threads the bilayer. Over 303–329 (YWAFGDALLTHSNALALLPRTPWRDAA) the chain is Extracellular. A helical membrane pass occupies residues 330 to 350 (VVLMLIHQFITFGFACTPLYF). Residues 351 to 371 (VWEKLVGLHGCPSLCKRAAAR) are Cytoplasmic-facing. The chain crosses the membrane as a helical span at residues 372-392 (LPVVLPIWFLAIIFPFFGPIN). Serine 393 is a topological domain (extracellular). Residues 394–414 (AVGSLLVSFTVYIIPSLAYMV) traverse the membrane as a helical segment. The Cytoplasmic segment spans residues 415–440 (TFRSPQSRQNAVERPPRFAGGWTGAY). The helical transmembrane segment at 441–461 (VINSFVVAWVLVVGFGFGGWA) threads the bilayer. Residues 462–547 (SITNFVHQVD…HHHRHHRHGL (86 aa)) lie on the Extracellular side of the membrane. Residue asparagine 509 is glycosylated (N-linked (GlcNAc...) asparagine).

The protein belongs to the amino acid/polyamine transporter 2 family. Amino acid/auxin permease (AAAP) (TC 2.A.18.1) subfamily.

Its subcellular location is the cell membrane. Carrier protein involved in proton-driven auxin influx. May mediate the formation of auxin gradient from developing leaves (site of auxin biosynthesis) to tips. This chain is Auxin transporter-like protein 3, found in Oryza sativa subsp. japonica (Rice).